Consider the following 113-residue polypeptide: Large ribosomal subunit protein bL17 (113 aa).

Belongs to the bacterial ribosomal protein bL17 family. As to quaternary structure, part of the 50S ribosomal subunit. Contacts protein L32.

This is Large ribosomal subunit protein bL17 from Clostridium novyi (strain NT).